We begin with the raw amino-acid sequence, 235 residues long: tRNA (cytidine-2'-O-)-methyltransferase TrmJ (235 aa).

Residues 77–79 (TSS), G111, I131, and 138–140 (PVL) contribute to the S-adenosyl-L-methionine site.

It belongs to the class IV-like SAM-binding methyltransferase superfamily. RNA methyltransferase TrmH family. In terms of assembly, homodimer.

The protein localises to the cytoplasm. The catalysed reaction is cytidine(32) in tRNA + S-adenosyl-L-methionine = 2'-O-methylcytidine(32) in tRNA + S-adenosyl-L-homocysteine + H(+). Catalyzes the formation of 2'O-methylated cytidine (Cm32) at position 32 in tRNA. Is specific for cytidine. The sequence is that of tRNA (cytidine-2'-O-)-methyltransferase TrmJ from Sulfolobus acidocaldarius (strain ATCC 33909 / DSM 639 / JCM 8929 / NBRC 15157 / NCIMB 11770).